The chain runs to 207 residues: Ras-related protein Rab-8B (207 aa).

S17, G18, V19, G20, K21, T22, C23, T35, S39, and T40 together coordinate GTP. Residue T22 coordinates Mg(2+). Short sequence motifs (switch) lie at residues 31–45 (DAFNTTFISTIGIDF) and 63–80 (DTAGQERFRTITTAYYRG). T40 and D63 together coordinate Mg(2+). G66 is a GTP binding site. Position 72 is a phosphothreonine; by LRRK2 (T72). N121, K122, D124, A152, and K153 together coordinate GTP. S180 carries the post-translational modification Phosphoserine. C204 is modified (cysteine methyl ester). C204 is lipidated: S-geranylgeranyl cysteine. A propeptide spans 205–207 (SLL) (removed in mature form).

The protein belongs to the small GTPase superfamily. Rab family. As to quaternary structure, associated with actin, delta-catenin and alpha and beta tubulins. Interacts with OTOF. Interacts with PEX5R. Interacts with RAB3IP. Interacts with VIM. Interacts with CDH1. Interacts with MICALL2. Interacts with GDI1, GDI2, CHML and CHM; phosphorylation at Thr-72 disrupts these interactions. Interacts with MICAL1. Requires Mg(2+) as cofactor. In terms of processing, phosphorylation of Thr-72 in the switch II region by LRRK2 prevents the association of RAB regulatory proteins, including CHM, CHML and RAB GDP dissociation inhibitors GDI1 and GDI2.

Its subcellular location is the cell membrane. The protein localises to the cytoplasmic vesicle. It localises to the phagosome. The protein resides in the phagosome membrane. It is found in the endosome membrane. It carries out the reaction GTP + H2O = GDP + phosphate + H(+). Regulated by guanine nucleotide exchange factors (GEFs) including RAB3IP/RABIN8 which promotes the exchange of bound GDP for free GTP. Regulated by GTPase activating proteins (GAPs) which increase the GTP hydrolysis activity. Inhibited by GDP dissociation inhibitors (GDIs). Functionally, the small GTPases Rab are key regulators of intracellular membrane trafficking, from the formation of transport vesicles to their fusion with membranes. Rabs cycle between an inactive GDP-bound form and an active GTP-bound form that is able to recruit to membranes different sets of downstream effectors directly responsible for vesicle formation, movement, tethering and fusion. RAB8B may be involved in polarized vesicular trafficking and neurotransmitter release. May participate in cell junction dynamics in Sertoli cells. May also participate in the export of a subset of neosynthesized proteins through a Rab8-Rab10-Rab11-dependent endososomal export route. The polypeptide is Ras-related protein Rab-8B (Homo sapiens (Human)).